A 274-amino-acid polypeptide reads, in one-letter code: 2,3,4,5-tetrahydropyridine-2,6-dicarboxylate N-succinyltransferase (274 aa).

Residues Arg-104 and Asp-141 each contribute to the substrate site.

The protein belongs to the transferase hexapeptide repeat family. As to quaternary structure, homotrimer.

The protein localises to the cytoplasm. The catalysed reaction is (S)-2,3,4,5-tetrahydrodipicolinate + succinyl-CoA + H2O = (S)-2-succinylamino-6-oxoheptanedioate + CoA. It functions in the pathway amino-acid biosynthesis; L-lysine biosynthesis via DAP pathway; LL-2,6-diaminopimelate from (S)-tetrahydrodipicolinate (succinylase route): step 1/3. This Shewanella putrefaciens (strain CN-32 / ATCC BAA-453) protein is 2,3,4,5-tetrahydropyridine-2,6-dicarboxylate N-succinyltransferase.